A 555-amino-acid polypeptide reads, in one-letter code: Sulfite reductase [ferredoxin] 1 (555 aa).

A cross-link (3'-(S-cysteinyl)-tyrosine (Tyr-Cys)) is located at residues 69–161 (YTQREQGYDG…SVGLQTTEAC (93 aa)). Residues Cys417, Cys423, Cys463, and Cys467 each contribute to the [4Fe-4S] cluster site. Residue Cys467 coordinates siroheme.

The protein belongs to the nitrite and sulfite reductase 4Fe-4S domain family. As to quaternary structure, monomer. Siroheme serves as cofactor. It depends on [4Fe-4S] cluster as a cofactor.

It catalyses the reaction hydrogen sulfide + 6 oxidized [2Fe-2S]-[ferredoxin] + 3 H2O = sulfite + 6 reduced [2Fe-2S]-[ferredoxin] + 7 H(+). Catalyzes the reduction of sulfite to sulfide, a step in the biosynthesis of sulfur-containing amino acids and cofactors. The chain is Sulfite reductase [ferredoxin] 1 (sir1) from Mycolicibacterium paratuberculosis (strain ATCC BAA-968 / K-10) (Mycobacterium paratuberculosis).